The chain runs to 62 residues: Photosystem II reaction center protein Z (62 aa).

The next 2 helical transmembrane spans lie at 8–28 and 41–61; these read AVFALIATSLILVIGVPVVFA and FSGTSLWIGLVFLVGILNSLI.

It belongs to the PsbZ family. PSII is composed of 1 copy each of membrane proteins PsbA, PsbB, PsbC, PsbD, PsbE, PsbF, PsbH, PsbI, PsbJ, PsbK, PsbL, PsbM, PsbT, PsbY, PsbZ, Psb30/Ycf12, at least 3 peripheral proteins of the oxygen-evolving complex and a large number of cofactors. It forms dimeric complexes.

Its subcellular location is the plastid. The protein resides in the chloroplast thylakoid membrane. Its function is as follows. May control the interaction of photosystem II (PSII) cores with the light-harvesting antenna, regulates electron flow through the 2 photosystem reaction centers. PSII is a light-driven water plastoquinone oxidoreductase, using light energy to abstract electrons from H(2)O, generating a proton gradient subsequently used for ATP formation. The protein is Photosystem II reaction center protein Z of Piper cenocladum (Ant piper).